A 256-amino-acid polypeptide reads, in one-letter code: Ubiquinone/menaquinone biosynthesis C-methyltransferase UbiE (256 aa).

S-adenosyl-L-methionine contacts are provided by residues Thr79, Asp100, and 128–129 (DA).

The protein belongs to the class I-like SAM-binding methyltransferase superfamily. MenG/UbiE family.

The enzyme catalyses a 2-demethylmenaquinol + S-adenosyl-L-methionine = a menaquinol + S-adenosyl-L-homocysteine + H(+). The catalysed reaction is a 2-methoxy-6-(all-trans-polyprenyl)benzene-1,4-diol + S-adenosyl-L-methionine = a 5-methoxy-2-methyl-3-(all-trans-polyprenyl)benzene-1,4-diol + S-adenosyl-L-homocysteine + H(+). The protein operates within quinol/quinone metabolism; menaquinone biosynthesis; menaquinol from 1,4-dihydroxy-2-naphthoate: step 2/2. It participates in cofactor biosynthesis; ubiquinone biosynthesis. Its function is as follows. Methyltransferase required for the conversion of demethylmenaquinol (DMKH2) to menaquinol (MKH2) and the conversion of 2-polyprenyl-6-methoxy-1,4-benzoquinol (DDMQH2) to 2-polyprenyl-3-methyl-6-methoxy-1,4-benzoquinol (DMQH2). This is Ubiquinone/menaquinone biosynthesis C-methyltransferase UbiE from Pseudomonas paraeruginosa (strain DSM 24068 / PA7) (Pseudomonas aeruginosa (strain PA7)).